Consider the following 21-residue polypeptide: Glucan endo-1,3-beta-glucosidase 2 (21 aa).

The interval 1 to 21 (APGDLLWSDEFDGAAGSAPNP) is disordered.

The enzyme catalyses Hydrolysis of (1-&gt;3)-beta-D-glucosidic linkages in (1-&gt;3)-beta-D-glucans.. The polypeptide is Glucan endo-1,3-beta-glucosidase 2 (Papiliotrema laurentii (Cryptococcus laurentii)).